The primary structure comprises 368 residues: MRKSEHKLTFMQTLIMISSTLIGAGVLTLPRSAAETGSPSGWLMILLQGVIFIIIVLLFLPFLQKNSGKTLFKLNSIVAGKFIGFLLNLYICLYFIGIVCFQARILGEVVGFFLLKNTPMAVVVFIFLAVAIYHVGGGVYSIAKVYAYIFPITLIIFMMLLMFSFRLFQLDFIRPVFEGGYQSFFSLFPKTLLYFSGFEIIFYLVPFMRDPKQVKKAVALGIATSTLFYSITLLIVIGCMTVAEAKTVTWPTISLIHALEVPGIFIERFDLFLQLTWTAQQFACMLGSFKGAHIGLTEIFHLKNKNNAWLLTAMLAATFFITMYPKDLNDVFYYGTLLGYAFLIVITIPFFVWFLSWIQKKIGRGQLQ.

Transmembrane regions (helical) follow at residues 10-30, 43-63, 82-102, 120-140, 145-165, 187-207, 217-237, 282-302, 308-328, and 338-358; these read FMQT…LTLP, LMIL…LPFL, FIGF…VCFQ, MAVV…GGVY, VYAY…MFSF, LFPK…LVPF, AVAL…LIVI, FACM…IFHL, AWLL…PKDL, and LGYA…LSWI.

Belongs to the amino acid-polyamine-organocation (APC) superfamily. Spore germination protein (SGP) (TC 2.A.3.9) family.

Its subcellular location is the cell membrane. Functionally, involved in the response to the germinative mixture of L-asparagine, glucose, fructose and potassium ions (AGFK). Could be an amino acid transporter. Cannot stimulate germination in the absence of gerD and gerK gene products (fructose and glucose receptors, respectively). The chain is Spore germination protein B2 (gerBB) from Bacillus subtilis (strain 168).